Consider the following 364-residue polypeptide: PHD finger protein 6 (364 aa).

At Ser2 the chain carries N-acetylserine. 2 consecutive short sequence motifs (nuclear localization signal) follow at residues 13 to 16 (RQRK) and 129 to 133 (RKHKK). A C2HC pre-PHD-type 1 zinc finger spans residues 14 to 52 (QRKCGFCKSNRDKECGQLLISENQKVAAHHKCMLFSSAL). The interval 14 to 132 (QRKCGFCKSN…IYMVYCRKHK (119 aa)) is extended PHD1 domain (ePHD1). A PHD-type 1 zinc finger spans residues 80–132 (LMCSLCHCPGATIGCDVKTCHRTYHYHCALHDKAQIREKPSQGIYMVYCRKHK). Residues Ser138, Ser145, and Ser155 each carry the phosphoserine modification. The segment at 139–211 (EADLEESFNE…RSSPNDTRPK (73 aa)) is disordered. The Nucleolar localization signal signature appears at 157–169 (KTKKKSRKGRPRK). Residues 157–171 (KTKKKSRKGRPRKTN) are compositionally biased toward basic residues. Lys173 participates in a covalent cross-link: Glycyl lysine isopeptide (Lys-Gly) (interchain with G-Cter in SUMO2). Residues Ser183 and Ser199 each carry the phosphoserine modification. A C2HC pre-PHD-type 2 zinc finger spans residues 209 to 249 (RPKCGFCHVGEEENEARGKLHIFNAKKAAAHYKCMLFSSGT). The tract at residues 209–330 (RPKCGFCHVG…IYKLYCKNHS (122 aa)) is extended PHD2 domain (ePHD2). Lys227 is covalently cross-linked (Glycyl lysine isopeptide (Lys-Gly) (interchain with G-Cter in SUMO2)). A PHD-type 2 zinc finger spans residues 278–330 (MKCTLCSQPGATIGCEIKACVKTYHYHCGVQDKAKYIENMSRGIYKLYCKNHS). The interval 330–364 (SGNDERDEEDEERESKSRGRVAIDQQLTQQQLNGN) is disordered. A compositionally biased stretch (polar residues) spans 354-364 (QQLTQQQLNGN). Thr357 is modified (phosphothreonine).

In terms of assembly, interacts with UBTF. Interacts with the NuRD complex component RBBP4 (via the nucleolar localization motif), the interaction mediates transcriptional repression activity. As to expression, at 12.5 dpc it is highly expressed in the embryonic central nervous system and at lower levels in other tissues. Very low levels present throughout the adult brain.

The protein localises to the nucleus. The protein resides in the nucleolus. It is found in the chromosome. Its subcellular location is the centromere. It localises to the kinetochore. Functionally, transcriptional regulator that associates with ribosomal RNA promoters and suppresses ribosomal RNA (rRNA) transcription. The sequence is that of PHD finger protein 6 (Phf6) from Mus musculus (Mouse).